The primary structure comprises 504 residues: Maturase K (504 aa).

Belongs to the intron maturase 2 family. MatK subfamily.

The protein resides in the plastid. It is found in the chloroplast. Its function is as follows. Usually encoded in the trnK tRNA gene intron. Probably assists in splicing its own and other chloroplast group II introns. The polypeptide is Maturase K (Impatiens capensis (Spotted jewelweed)).